The sequence spans 378 residues: Lipoyl synthase, mitochondrial (378 aa).

7 residues coordinate [4Fe-4S] cluster: C109, C114, C120, C140, C144, C147, and S356. The Radical SAM core domain occupies 125–345; the sequence is ETGTATATIM…QTLGMEMGFR (221 aa).

The protein belongs to the radical SAM superfamily. Lipoyl synthase family. Requires [4Fe-4S] cluster as cofactor.

It localises to the mitochondrion. It carries out the reaction [[Fe-S] cluster scaffold protein carrying a second [4Fe-4S](2+) cluster] + N(6)-octanoyl-L-lysyl-[protein] + 2 oxidized [2Fe-2S]-[ferredoxin] + 2 S-adenosyl-L-methionine + 4 H(+) = [[Fe-S] cluster scaffold protein] + N(6)-[(R)-dihydrolipoyl]-L-lysyl-[protein] + 4 Fe(3+) + 2 hydrogen sulfide + 2 5'-deoxyadenosine + 2 L-methionine + 2 reduced [2Fe-2S]-[ferredoxin]. Its pathway is protein modification; protein lipoylation via endogenous pathway; protein N(6)-(lipoyl)lysine from octanoyl-[acyl-carrier-protein]: step 2/2. In terms of biological role, catalyzes the radical-mediated insertion of two sulfur atoms into the C-6 and C-8 positions of the octanoyl moiety bound to the lipoyl domains of lipoate-dependent enzymes, thereby converting the octanoylated domains into lipoylated derivatives. The sequence is that of Lipoyl synthase, mitochondrial from Medicago truncatula (Barrel medic).